The sequence spans 27 residues: Morintide mO5 (27 aa).

The Chitin-binding type-1 domain maps to 1-27; the sequence is NGLCCSQYGFCGTTSQYCSRANGCQSN. Residues C4 and C18 are joined by a disulfide bond.

In terms of tissue distribution, seeds (at protein level).

Functionally, chitin-binding protein which functions in defense against chitin-containing fungal pathogens. The sequence is that of Morintide mO5 from Moringa oleifera (Horseradish tree).